Here is a 265-residue protein sequence, read N- to C-terminus: S-adenosylmethionine decarboxylase proenzyme (265 aa).

Serine 114 serves as the catalytic Schiff-base intermediate with substrate; via pyruvic acid. Serine 114 carries the post-translational modification Pyruvic acid (Ser); by autocatalysis. The active-site Proton acceptor; for processing activity is the histidine 119. The Proton donor; for catalytic activity role is filled by cysteine 142.

Belongs to the prokaryotic AdoMetDC family. Type 2 subfamily. As to quaternary structure, heterooctamer of four alpha and four beta chains arranged as a tetramer of alpha/beta heterodimers. Requires pyruvate as cofactor. In terms of processing, is synthesized initially as an inactive proenzyme. Formation of the active enzyme involves a self-maturation process in which the active site pyruvoyl group is generated from an internal serine residue via an autocatalytic post-translational modification. Two non-identical subunits are generated from the proenzyme in this reaction, and the pyruvate is formed at the N-terminus of the alpha chain, which is derived from the carboxyl end of the proenzyme. The post-translation cleavage follows an unusual pathway, termed non-hydrolytic serinolysis, in which the side chain hydroxyl group of the serine supplies its oxygen atom to form the C-terminus of the beta chain, while the remainder of the serine residue undergoes an oxidative deamination to produce ammonia and the pyruvoyl group blocking the N-terminus of the alpha chain.

The enzyme catalyses S-adenosyl-L-methionine + H(+) = S-adenosyl 3-(methylsulfanyl)propylamine + CO2. The protein operates within amine and polyamine biosynthesis; S-adenosylmethioninamine biosynthesis; S-adenosylmethioninamine from S-adenosyl-L-methionine: step 1/1. In terms of biological role, catalyzes the decarboxylation of S-adenosylmethionine to S-adenosylmethioninamine (dcAdoMet), the propylamine donor required for the synthesis of the polyamines spermine and spermidine from the diamine putrescine. The polypeptide is S-adenosylmethionine decarboxylase proenzyme (Buchnera aphidicola subsp. Acyrthosiphon pisum (strain 5A)).